The chain runs to 229 residues: NAD(P)H-hydrate epimerase (229 aa).

In terms of domain architecture, YjeF N-terminal spans 11–222 (YAAADIRAAE…DVGLDLSGAT (212 aa)). Residue 59–63 (NNGGD) coordinates (6S)-NADPHX. Residues Asn-60 and Asp-124 each coordinate K(+). (6S)-NADPHX-binding positions include 128-136 (GIGTTASPA) and Asp-164. Residue Ser-167 participates in K(+) binding.

It belongs to the NnrE/AIBP family. K(+) serves as cofactor.

It catalyses the reaction (6R)-NADHX = (6S)-NADHX. It carries out the reaction (6R)-NADPHX = (6S)-NADPHX. Functionally, catalyzes the epimerization of the S- and R-forms of NAD(P)HX, a damaged form of NAD(P)H that is a result of enzymatic or heat-dependent hydration. This is a prerequisite for the S-specific NAD(P)H-hydrate dehydratase to allow the repair of both epimers of NAD(P)HX. In Clavibacter sepedonicus (Clavibacter michiganensis subsp. sepedonicus), this protein is NAD(P)H-hydrate epimerase.